The sequence spans 459 residues: tRNA modification GTPase MnmE (459 aa).

Arg22, Glu87, and Arg126 together coordinate (6S)-5-formyl-5,6,7,8-tetrahydrofolate. One can recognise a TrmE-type G domain in the interval 221–381 (GINVAICGKP…LEESIEKAVL (161 aa)). Asn231 contacts K(+). GTP-binding positions include 231–236 (NVGKSS), 250–256 (TSIPGTT), and 275–278 (DTAG). Ser235 contacts Mg(2+). Residues Thr250, Ile252, and Thr255 each contribute to the K(+) site. Thr256 contributes to the Mg(2+) binding site. Lys459 contributes to the (6S)-5-formyl-5,6,7,8-tetrahydrofolate binding site.

The protein belongs to the TRAFAC class TrmE-Era-EngA-EngB-Septin-like GTPase superfamily. TrmE GTPase family. In terms of assembly, homodimer. Heterotetramer of two MnmE and two MnmG subunits. It depends on K(+) as a cofactor.

Its subcellular location is the cytoplasm. Functionally, exhibits a very high intrinsic GTPase hydrolysis rate. Involved in the addition of a carboxymethylaminomethyl (cmnm) group at the wobble position (U34) of certain tRNAs, forming tRNA-cmnm(5)s(2)U34. This is tRNA modification GTPase MnmE from Syntrophomonas wolfei subsp. wolfei (strain DSM 2245B / Goettingen).